We begin with the raw amino-acid sequence, 346 residues long: UDP-3-O-acylglucosamine N-acyltransferase (346 aa).

His253 serves as the catalytic Proton acceptor.

It belongs to the transferase hexapeptide repeat family. LpxD subfamily. As to quaternary structure, homotrimer.

The catalysed reaction is a UDP-3-O-[(3R)-3-hydroxyacyl]-alpha-D-glucosamine + a (3R)-hydroxyacyl-[ACP] = a UDP-2-N,3-O-bis[(3R)-3-hydroxyacyl]-alpha-D-glucosamine + holo-[ACP] + H(+). It participates in bacterial outer membrane biogenesis; LPS lipid A biosynthesis. Functionally, catalyzes the N-acylation of UDP-3-O-acylglucosamine using 3-hydroxyacyl-ACP as the acyl donor. Is involved in the biosynthesis of lipid A, a phosphorylated glycolipid that anchors the lipopolysaccharide to the outer membrane of the cell. In Rickettsia peacockii (strain Rustic), this protein is UDP-3-O-acylglucosamine N-acyltransferase.